The primary structure comprises 488 residues: MEKSWFNLMFSKGELEYRSGLNKAMDSIENEKTTISKDRFIYDMDKNFYGWGERSSYYNNVDLLVSSKDIRNFISDDTFFVRDSNKNSYSIYFDIKKKKFEINNDLSDLEFFFYSYSYCSSSYLNNRSKSDNDPHYDPYIKDTKYNCNNHINSCIDSYFRSHICIDSHFLSDSNNSNESYIYNFICSESGKIRESKNYKIRTNRNRNNLMSSKDFDITKNYNQLWIQCDNCYGLMYKKVEMNVCEECGHYLKMTSSERIELSIDPGTWNPMDEDMVSTDPIKFHSGEEPYKNRIDSAQKTTGLTDAVQTGIGQLNGIPTALGVMDFKFMGGSMGSVVGEKITRLIEYATNQCLPLILVCSSGGARMQEGSLSLMQMAKISSVLCNYQSSKKLFYISILTSPTTGGVTASFGMLGDIIIAEPYAYIAFAGKRVIEQTLKKAVPEGSQAAESLLRKGLLDAIVPRNPLKGVVSELFQLHAFFPLNKNEIK.

The 265-residue stretch at 224-488 folds into the CoA carboxyltransferase N-terminal domain; the sequence is LWIQCDNCYG…FFPLNKNEIK (265 aa). Zn(2+)-binding residues include cysteine 228, cysteine 231, cysteine 244, and cysteine 247. The C4-type zinc-finger motif lies at 228-247; the sequence is CDNCYGLMYKKVEMNVCEEC.

This sequence belongs to the AccD/PCCB family. As to quaternary structure, acetyl-CoA carboxylase is a heterohexamer composed of biotin carboxyl carrier protein, biotin carboxylase and 2 subunits each of ACCase subunit alpha and ACCase plastid-coded subunit beta (accD). It depends on Zn(2+) as a cofactor.

The protein resides in the plastid. It is found in the chloroplast stroma. The catalysed reaction is N(6)-carboxybiotinyl-L-lysyl-[protein] + acetyl-CoA = N(6)-biotinyl-L-lysyl-[protein] + malonyl-CoA. The protein operates within lipid metabolism; malonyl-CoA biosynthesis; malonyl-CoA from acetyl-CoA: step 1/1. In terms of biological role, component of the acetyl coenzyme A carboxylase (ACC) complex. Biotin carboxylase (BC) catalyzes the carboxylation of biotin on its carrier protein (BCCP) and then the CO(2) group is transferred by the transcarboxylase to acetyl-CoA to form malonyl-CoA. The sequence is that of Acetyl-coenzyme A carboxylase carboxyl transferase subunit beta, chloroplastic from Arabis hirsuta (Hairy rock-cress).